Consider the following 200-residue polypeptide: Large ribosomal subunit protein uL4 (200 aa).

Residues 42–65 are disordered; it reads TRAQKTRSEVSGGGAKPWRQKGTG.

Belongs to the universal ribosomal protein uL4 family. In terms of assembly, part of the 50S ribosomal subunit.

Functionally, one of the primary rRNA binding proteins, this protein initially binds near the 5'-end of the 23S rRNA. It is important during the early stages of 50S assembly. It makes multiple contacts with different domains of the 23S rRNA in the assembled 50S subunit and ribosome. Its function is as follows. Forms part of the polypeptide exit tunnel. The protein is Large ribosomal subunit protein uL4 of Vibrio parahaemolyticus serotype O3:K6 (strain RIMD 2210633).